The following is an 89-amino-acid chain: Small ribosomal subunit protein uS15 (89 aa).

Belongs to the universal ribosomal protein uS15 family. As to quaternary structure, part of the 30S ribosomal subunit. Forms a bridge to the 50S subunit in the 70S ribosome, contacting the 23S rRNA.

In terms of biological role, one of the primary rRNA binding proteins, it binds directly to 16S rRNA where it helps nucleate assembly of the platform of the 30S subunit by binding and bridging several RNA helices of the 16S rRNA. Its function is as follows. Forms an intersubunit bridge (bridge B4) with the 23S rRNA of the 50S subunit in the ribosome. This is Small ribosomal subunit protein uS15 from Allorhizobium ampelinum (strain ATCC BAA-846 / DSM 112012 / S4) (Agrobacterium vitis (strain S4)).